The chain runs to 992 residues: Meckelin (992 aa).

The N-terminal stretch at 1–36 (MVTRTRPVAAMAVRSRSSSRTGTAYLLLVLCEVSWA) is a signal peptide. A cysteine-rich region spans residues 37-280 (QIFSFPFRRP…FHYIFESTAG (244 aa)). At 37–516 (QIFSFPFRRP…SVKYEMNQGD (480 aa)) the chain is on the extracellular side. 12 disulfides stabilise this stretch: C49-C62, C65-C78, C80-C97, C100-C114, C117-C127, C129-C150, C153-C170, C173-C184, C186-C197, C237-C246, C253-C268, and C354-C375. N242 is a glycosylation site (N-linked (GlcNAc...) asparagine). A helical membrane pass occupies residues 517-545 (ASVHTDIALGVLGGLAVLSSLLKTAGWKR). Residues 546–555 (RVGSPMIDLQ) are Cytoplasmic-facing. The chain crosses the membrane as a helical span at residues 556 to 587 (TVMKFLLYYAGDLANVFFIITVGTGLYWLIFF). The Extracellular portion of the chain corresponds to 588 to 600 (KAQKSVSVLLPMP). A helical membrane pass occupies residues 601-628 (VQEERFVTYVGCAFAMKALQFLHKFISQ). Over 629–667 (ISIDIFFIDWERPKGKVLKAVEGEGGVRSATVPVSIWRT) the chain is Cytoplasmic. An intramembrane region (helical) is located at residues 668-676 (YFVANEWNE). Residues 668 to 698 (YFVANEWNEIQTVRKINPLFQVLTTLFFLEV) traverse the membrane as a discontinuously helical segment. An intramembrane segment occupies 677–685 (IQTVRKINP). Residues 686–698 (LFQVLTTLFFLEV) constitute an intramembrane region (helical). Residues 699 to 728 (VGFKNLALMDSSSSLSRNPSDYTAPYSRIL) are Extracellular-facing. Residues 729-754 (RYAVATAIWLVIGIIQVVFFAAFYER) constitute an intramembrane region (helical). A discontinuously helical membrane pass occupies residues 729–768 (RYAVATAIWLVIGIIQVVFFAAFYERFIEDKIRQFVDLCS). An intramembrane segment occupies 755 to 759 (FIEDK). An intramembrane region (helical) is located at residues 760-768 (IRQFVDLCS). Residues 769 to 923 (MSNVSVFLLS…SIFYNDEGHS (155 aa)) lie on the Cytoplasmic side of the membrane. The helical intramembrane region spans 924–926 (FSS). Residues 924 to 949 (FSSVLYYGNEATLLIFDLLFFCVVDL) form a discontinuously helical membrane-spanning segment. Residues 927–933 (VLYYGNE) lie within the membrane without spanning it. Residues 934–949 (ATLLIFDLLFFCVVDL) constitute an intramembrane region (helical). At 950–954 (ACQDF) the chain is on the extracellular side. A helical transmembrane segment spans residues 955-982 (VLASFLTYLQQEIFRFIRNTVGQKNLAT). Residues 983-992 (KTLVDERFLI) lie on the Cytoplasmic side of the membrane.

As to quaternary structure, homodimer. Part of the tectonic-like complex (also named B9 complex). Interacts with DNAJB9, DNAJC10 and mutated SFTPC. Interacts with SYNE2 during the early establishment of cell polarity. Interacts (via C-terminus) with FLNA. Interacts with TMEM218. Interacts with WNT5A. Interacts with ROR2.

Its subcellular location is the cell membrane. The protein localises to the endoplasmic reticulum membrane. It is found in the cytoplasm. The protein resides in the cytoskeleton. It localises to the cilium basal body. Part of the tectonic-like complex which is required for tissue-specific ciliogenesis and may regulate ciliary membrane composition. Involved in centrosome migration to the apical cell surface during early ciliogenesis. Required for ciliary structure and function, including a role in regulating length and appropriate number through modulating centrosome duplication. Is a key regulator of stereociliary bundle orientation. Required for epithelial cell branching morphology. Essential for endoplasmic reticulum-associated degradation (ERAD) of surfactant protein C (sftpc). Involved in the negative regulation of canonical Wnt signaling, and activation of the non-canonical cascade stimulated by WNT5A. In non-canonical Wnt signaling, it may act as ROR2 coreceptor. This Mus musculus (Mouse) protein is Meckelin (Tmem67).